Here is a 71-residue protein sequence, read N- to C-terminus: Small, acid-soluble spore protein 2 (71 aa).

This sequence belongs to the alpha/beta-type SASP family.

SASP are bound to spore DNA. They are double-stranded DNA-binding proteins that cause DNA to change to an a-like conformation. They protect the DNA backbone from chemical and enzymatic cleavage and are thus involved in dormant spore's high resistance to UV light. The polypeptide is Small, acid-soluble spore protein 2 (Bacillus subtilis).